The following is a 122-amino-acid chain: Holo-[acyl-carrier-protein] synthase (122 aa).

Mg(2+) contacts are provided by Asp-8 and Glu-56.

This sequence belongs to the P-Pant transferase superfamily. AcpS family. Mg(2+) serves as cofactor.

It localises to the cytoplasm. The catalysed reaction is apo-[ACP] + CoA = holo-[ACP] + adenosine 3',5'-bisphosphate + H(+). Functionally, transfers the 4'-phosphopantetheine moiety from coenzyme A to a Ser of acyl-carrier-protein. The sequence is that of Holo-[acyl-carrier-protein] synthase from Alkaliphilus metalliredigens (strain QYMF).